Reading from the N-terminus, the 173-residue chain is Alpha-crystallin A chain (173 aa).

Residue methionine 1 is modified to N-acetylmethionine. The required for complex formation with BFSP1 and BFSP2 stretch occupies residues 1 to 63; the sequence is MDIAIQHPWF…RTVLDSGVSE (63 aa). Glutamine 6 bears the Deamidated glutamine; partial mark. Serine 45 carries the phosphoserine modification. The residue at position 50 (glutamine 50) is a Deamidated glutamine; partial. One can recognise a sHSP domain in the interval 52 to 162; it reads LFRTVLDSGV…GHSERAIPVS (111 aa). Position 70 is an N6-acetyllysine (lysine 70). Histidine 79 lines the Zn(2+) pocket. Glutamine 90 is subject to Deamidated glutamine; partial. Lysine 99 carries the post-translational modification N6-acetyllysine. A Zn(2+)-binding site is contributed by histidine 100. At asparagine 101 the chain carries Deamidated asparagine; partial. Residues glutamate 102 and histidine 107 each coordinate Zn(2+). Position 122 is a phosphoserine (serine 122). Asparagine 123 is modified (deamidated asparagine; partial). The interval 144-173 is disordered; the sequence is PKVPSGVDAGHSERAIPVSREEKPSSAPTS. The span at 153 to 167 shows a compositional bias: basic and acidic residues; it reads GHSERAIPVSREEKP. Residue histidine 154 coordinates Zn(2+). Serine 162 is a glycosylation site (O-linked (GlcNAc) serine).

Belongs to the small heat shock protein (HSP20) family. In terms of assembly, heteromer composed of three CRYAA and one CRYAB subunits. Inter-subunit bridging via zinc ions enhances stability, which is crucial as there is no protein turn over in the lens. Can also form homodimers and homotetramers (dimers of dimers) which serve as the building blocks of homooligomers. Within homooligomers, the zinc-binding motif is created from residues of 3 different molecules. His-100 and Glu-102 from one molecule are ligands of the zinc ion, and His-107 and His-154 residues from additional molecules complete the site with tetrahedral coordination geometry. Part of a complex required for lens intermediate filament formation composed of BFSP1, BFSP2 and CRYAA. In terms of processing, acetylation at Lys-70 may increase chaperone activity. Post-translationally, undergoes age-dependent proteolytical cleavage at the C-terminus.

It localises to the cytoplasm. The protein localises to the nucleus. Functionally, contributes to the transparency and refractive index of the lens. Acts as a chaperone, preventing aggregation of various proteins under a wide range of stress conditions. Required for the correct formation of lens intermediate filaments as part of a complex composed of BFSP1, BFSP2 and CRYAA. The protein is Alpha-crystallin A chain (CRYAA) of Sus scrofa (Pig).